The sequence spans 1085 residues: DNA-directed RNA polymerase subunit beta (1085 aa).

Belongs to the RNA polymerase beta chain family. As to quaternary structure, in plastids the minimal PEP RNA polymerase catalytic core is composed of four subunits: alpha, beta, beta', and beta''. When a (nuclear-encoded) sigma factor is associated with the core the holoenzyme is formed, which can initiate transcription.

It is found in the plastid. The protein localises to the chloroplast. The enzyme catalyses RNA(n) + a ribonucleoside 5'-triphosphate = RNA(n+1) + diphosphate. Its function is as follows. DNA-dependent RNA polymerase catalyzes the transcription of DNA into RNA using the four ribonucleoside triphosphates as substrates. The sequence is that of DNA-directed RNA polymerase subunit beta from Physcomitrium patens (Spreading-leaved earth moss).